An 86-amino-acid chain; its full sequence is Small ribosomal subunit protein bS16 (86 aa).

The protein belongs to the bacterial ribosomal protein bS16 family.

This Acidithiobacillus ferrooxidans (strain ATCC 23270 / DSM 14882 / CIP 104768 / NCIMB 8455) (Ferrobacillus ferrooxidans (strain ATCC 23270)) protein is Small ribosomal subunit protein bS16.